The sequence spans 83 residues: Small ribosomal subunit protein uS17 (83 aa).

This sequence belongs to the universal ribosomal protein uS17 family. In terms of assembly, part of the 30S ribosomal subunit.

Functionally, one of the primary rRNA binding proteins, it binds specifically to the 5'-end of 16S ribosomal RNA. In Francisella philomiragia subsp. philomiragia (strain ATCC 25017 / CCUG 19701 / FSC 153 / O#319-036), this protein is Small ribosomal subunit protein uS17.